The sequence spans 205 residues: Urease accessory protein UreG (205 aa).

14–21 (GPVGSGKT) contributes to the GTP binding site.

It belongs to the SIMIBI class G3E GTPase family. UreG subfamily. As to quaternary structure, homodimer. UreD, UreF and UreG form a complex that acts as a GTP-hydrolysis-dependent molecular chaperone, activating the urease apoprotein by helping to assemble the nickel containing metallocenter of UreC. The UreE protein probably delivers the nickel.

It is found in the cytoplasm. In terms of biological role, facilitates the functional incorporation of the urease nickel metallocenter. This process requires GTP hydrolysis, probably effectuated by UreG. In Citrobacter koseri (strain ATCC BAA-895 / CDC 4225-83 / SGSC4696), this protein is Urease accessory protein UreG.